The following is a 297-amino-acid chain: ClpXP adapter protein SpxH (297 aa).

It belongs to the SpxH family. In terms of assembly, interacts with Spx.

It localises to the cytoplasm. Functionally, adapter protein required for efficient degradation of Spx by ClpXP under non-stress conditions. Interaction with Spx stabilizes Spx and exposes the C-terminus of Spx for recognition and proteolysis by ClpXP. The polypeptide is ClpXP adapter protein SpxH (Bacillus cereus (strain ATCC 14579 / DSM 31 / CCUG 7414 / JCM 2152 / NBRC 15305 / NCIMB 9373 / NCTC 2599 / NRRL B-3711)).